Consider the following 418-residue polypeptide: MFSPDQENHPSKAPVKYGELIVLGYNGSLPNGDRGRRKSRFALFKRPKANGVKPSTVHIACTPQAAKAISNKDQHSISYTLSRAQTVVVEYTHDSNTDMFQIGRSTESPIDFVVTDTVPGSQSNSDTQSVQSTISRFACRIICERNPPFTARIYAAGFDSSKNIFLGEKAAKWKTSDGQMDGLTTNGVLVMHPRNGFTEDSKPGIWREISVCGNVFSLRETRSAQQRGKMVEIETNQLQDGSLIDLCGATLLWRTAEGLSHTPTVKHLEALRQEINAARPQCPVGFNTLAFPSMKRKDVVDEKQPWVYLNCGHVHGYHNWGNKEERDGKDRECPMCRSVGPYVPLWLGCEAGFYVDAGPPTHAFSPCGHVCSEKTTAYWSQIPLPHGTHTFHAACPFCAHQLAGEQGYIRLIFQGPLD.

Positions 13–200 (APVKYGELIV…MHPRNGFTED (188 aa)) constitute an FHA; atypical domain. The residue at position 121 (Ser-121) is a Phosphoserine; by ATM. Thr-127 carries the phosphothreonine; by ATM modification. Residues 311-399 (CGHVHGYHNW…TFHAACPFCA (89 aa)) are ring-like domain; necessary for ubiqitination of RIPK3.

It belongs to the pellino family. As to quaternary structure, interacts with MAP3K7. Upon IL1B treatment, forms a complex with TRAF6, IRAK1, IRAK4 and MYD88; this complex recruits MAP3K7/TAK1, TAB1 and TAB2 to mediate NF-kappa-B activation. Direct binding of SMAD6 to PELI1 prevents the complex formation and hence negatively regulates IL1R-TLR signaling and eventually NF-kappa-B-mediated gene expression. Interacts (via atypical FHA domain) with RIPK3; preferentially binds to the 'Thr-182' phosphorylated form of RIPK3. Interacts with RIPK1 and IRAK1. Post-translationally, phosphorylation by IRAK1 and IRAK4 enhances its E3 ligase activity. Phosphorylated by ATM in response to DNA damage, promoting localization to DNA double-strand breaks (DSBs) and ability to mediate 'Lys-63'-linked ubiquitination of NBN. Sumoylated. In terms of tissue distribution, expressed at high levels in normal skin but decreased in keratinocytes from toxic epidermal necrolysis (TEN) patients (at protein level).

The protein resides in the chromosome. It catalyses the reaction S-ubiquitinyl-[E2 ubiquitin-conjugating enzyme]-L-cysteine + [acceptor protein]-L-lysine = [E2 ubiquitin-conjugating enzyme]-L-cysteine + N(6)-ubiquitinyl-[acceptor protein]-L-lysine.. Its pathway is protein modification; protein ubiquitination. E3 ubiquitin ligase catalyzing the covalent attachment of ubiquitin moieties onto substrate proteins. Involved in the TLR and IL-1 signaling pathways via interaction with the complex containing IRAK kinases and TRAF6. Acts as a positive regulator of inflammatory response in microglia through activation of NF-kappa-B and MAP kinase. Mediates 'Lys-63'-linked polyubiquitination of IRAK1 allowing subsequent NF-kappa-B activation. Conjugates 'Lys-63'-linked ubiquitin chains to the adapter protein ASC/PYCARD, which in turn is crucial for NLRP3 inflammasome activation. Mediates 'Lys-48'-linked polyubiquitination of RIPK3 leading to its subsequent proteasome-dependent degradation; preferentially recognizes and mediates the degradation of the 'Thr-182' phosphorylated form of RIPK3. Negatively regulates necroptosis by reducing RIPK3 expression. Mediates 'Lys-63'-linked ubiquitination of RIPK1. Following phosphorylation by ATM, catalyzes 'Lys-63'-linked ubiquitination of NBN, promoting DNA repair via homologous recombination. Negatively regulates activation of the metabolic mTORC1 signaling pathway by mediating 'Lys-63'-linked ubiquitination of mTORC1-inhibitory protein TSC1 and thereby promoting TSC1/TSC2 complex stability. The chain is E3 ubiquitin-protein ligase pellino homolog 1 from Homo sapiens (Human).